A 551-amino-acid chain; its full sequence is Solute carrier family 22 member 3 (551 aa).

The chain crosses the membrane as a helical span at residues 21–41; sequence VFLLLCLTGVTFAFLFVGVVF. N-linked (GlcNAc...) asparagine glycosylation is found at N72, N99, and N114. A helical membrane pass occupies residues 177-197; that stretch reads LIVYLISCFGVGITGVVVAFA. An N-linked (GlcNAc...) asparagine glycan is attached at N199. 2 helical membrane passes run 236–256 and 264–284; these read IVGIVIQMFFTLGIIILPGIA and GIQLAISLPSFLFLLYYWVVP. A Proline-rich sequence motif is present at residues 284–288; the sequence is PESPR. A glycan (N-linked (GlcNAc...) asparagine) is linked at N317. A run of 3 helical transmembrane segments spans residues 376–396, 463–483, and 493–513; these read MDFFISGLVELPGALLILLTI, FGVSLCSGLCDFGGIIAPFLL, and LPLIIFGILASVCGGLVMLLP.

Belongs to the major facilitator (TC 2.A.1) superfamily. Organic cation transporter (TC 2.A.1.19) family. In terms of tissue distribution, highly expressed in placenta. Expressed in intestine, hear, kidney and lung. Widely expressed in brain, particularly in hippocampus, cerebellum, cerebral cortex. In the brain, expressed predominantly in regions located at the brain-cerebrospinal fluid border, with expression extending to regions that belong to monoaminergic pathways such as raphe nuclei, striatum and thalamus. In brain, expressed in neurons and glial cells of amygdala. Expression is low in kidney and lung and undetectable in liver. Expressed in Sertoli cells in testis. Expressed in tracheal and bronchial epithelium of the respiratory tract, where it localizes to the apical membrane of ciliated and brush cells, and in basal cells.

It localises to the cell membrane. Its subcellular location is the apical cell membrane. The protein localises to the basolateral cell membrane. The protein resides in the mitochondrion membrane. It is found in the endomembrane system. It localises to the nucleus membrane. Its subcellular location is the nucleus outer membrane. The catalysed reaction is (R)-noradrenaline(out) = (R)-noradrenaline(in). The enzyme catalyses (R)-adrenaline(out) = (R)-adrenaline(in). It catalyses the reaction serotonin(out) = serotonin(in). It carries out the reaction dopamine(out) = dopamine(in). The catalysed reaction is histamine(out) = histamine(in). The enzyme catalyses tyramine(in) = tyramine(out). It catalyses the reaction guanidine(out) = guanidine(in). It carries out the reaction agmatine(out) = agmatine(in). The catalysed reaction is spermidine(in) = spermidine(out). The enzyme catalyses L-histidyl-L-proline diketopiperazine(in) = L-histidyl-L-proline diketopiperazine(out). It catalyses the reaction (R)-salsolinol(in) = (R)-salsolinol(out). In terms of biological role, electrogenic voltage-dependent transporter that mediates the transport of a variety of organic cations such as endogenous bioactive amines, cationic drugs and xenobiotics. Cation cellular uptake or release is driven by the electrochemical potential, i.e. membrane potential and concentration gradient. Functions as a Na(+)- and Cl(-)-independent, bidirectional uniporter. Implicated in neuronal monoamine neurotransmitters cellular uptake such as dopamine, adrenaline/epinephrine, noradrenaline/norepinephrine, histamine, serotonin and tyramine, thereby supporting a role in homeostatic regulation of aminergic neurotransmission in the brain. Transports dopaminergic neuromodulators cyclo(his-pro) and salsolinol with low efficiency. May be involved in the uptake and disposition of cationic compounds by renal clearance from the blood flow. May contribute to regulate the transport of cationic compounds in testis across the blood-testis-barrier. Mediates the transport of polyamine spermidine and putrescine. Mediates the bidirectional transport of polyamine agmatine. Also transports guanidine. May also mediate intracellular transport of organic cations, thereby playing a role in amine metabolism and intracellular signaling. The protein is Solute carrier family 22 member 3 of Rattus norvegicus (Rat).